The sequence spans 497 residues: MSGALLVAGTSSDAGKSVVVAGLCRLLARRGVRVAPFKAQNMSNNSAVTVEGGEIGRAQAIQARAAGLEPSVRFNPILLKPGSDRTSQLVIKGQVAESVTATSYVQHRDRLAALVLNELTCLRDEFDAVICEGAGSPAEINLRATDLANMGLARAADLAVILVGDIDRGGLLAHLFGTVAVLDPQDQALIAGFVVNKFRGDPALLQPGLRRLHDITGRPTYGVLPYADRLWLDAEDSLSVLAHRVVGAPDPPLGDDWLRVAAVRLPRISNSTDVEALACEPGVLVRWVSEPSDVADADLVVIPGSKATVADLSWLRERGLAAAITAHAAAGRPVLGICGGFQMLCRRIDDRVESGAGEVAGLGLLDADIAFHPAKTLRRWQRPLAGYEIHHGRVSRCAEHSWFDSDAEPQGLVRGAVFGTHWHGLLDNDDFRRAWLVRVADAAGRRFVPGDTDVAARRDAQLDLAADLLAAHLDVDAVLGLLDGPPPRPRLATRLCR.

One can recognise a GATase cobBQ-type domain in the interval 257-431 (WLRVAAVRLP…WHGLLDNDDF (175 aa)). Cys-338 acts as the Nucleophile in catalysis. His-423 is an active-site residue.

The protein belongs to the CobB/CobQ family. CobQ subfamily.

It participates in cofactor biosynthesis; adenosylcobalamin biosynthesis. Functionally, catalyzes amidations at positions B, D, E, and G on adenosylcobyrinic A,C-diamide. NH(2) groups are provided by glutamine, and one molecule of ATP is hydrogenolyzed for each amidation. In Mycolicibacterium paratuberculosis (strain ATCC BAA-968 / K-10) (Mycobacterium paratuberculosis), this protein is Cobyric acid synthase.